The primary structure comprises 126 residues: Acidic phospholipase A2 S1E6-b (126 aa).

The first 3 residues, 1–3, serve as a signal peptide directing secretion; sequence VEG. Intrachain disulfides connect Cys-29–Cys-119, Cys-31–Cys-47, Cys-46–Cys-98, Cys-52–Cys-126, Cys-53–Cys-91, Cys-60–Cys-84, and Cys-78–Cys-89. Positions 30, 32, and 34 each coordinate Ca(2+). His-50 is a catalytic residue. Ca(2+) is bound at residue Asp-51. Asp-92 is an active-site residue.

Homodimer. It depends on Ca(2+) as a cofactor. As to expression, expressed by the venom gland.

The protein resides in the secreted. It catalyses the reaction a 1,2-diacyl-sn-glycero-3-phosphocholine + H2O = a 1-acyl-sn-glycero-3-phosphocholine + a fatty acid + H(+). Its function is as follows. Snake venom phospholipase that inhibits ADP-induced platelet aggregation. PLA2 catalyzes the calcium-dependent hydrolysis of the 2-acyl groups in 3-sn-phosphoglycerides. The polypeptide is Acidic phospholipase A2 S1E6-b (Calloselasma rhodostoma (Malayan pit viper)).